The following is a 440-amino-acid chain: UDP-N-acetylmuramoylalanine--D-glutamate ligase (440 aa).

115 to 121 (GSNGKST) provides a ligand contact to ATP.

It belongs to the MurCDEF family.

Its subcellular location is the cytoplasm. It carries out the reaction UDP-N-acetyl-alpha-D-muramoyl-L-alanine + D-glutamate + ATP = UDP-N-acetyl-alpha-D-muramoyl-L-alanyl-D-glutamate + ADP + phosphate + H(+). Its pathway is cell wall biogenesis; peptidoglycan biosynthesis. Cell wall formation. Catalyzes the addition of glutamate to the nucleotide precursor UDP-N-acetylmuramoyl-L-alanine (UMA). The protein is UDP-N-acetylmuramoylalanine--D-glutamate ligase of Vibrio cholerae serotype O1 (strain ATCC 39315 / El Tor Inaba N16961).